A 494-amino-acid chain; its full sequence is Cobyric acid synthase (494 aa).

The region spanning 252-444 (DLNIAVIRLP…LHGLFDNGPW (193 aa)) is the GATase cobBQ-type domain. The active-site Nucleophile is C333. H436 is an active-site residue.

The protein belongs to the CobB/CobQ family. CobQ subfamily.

It functions in the pathway cofactor biosynthesis; adenosylcobalamin biosynthesis. Catalyzes amidations at positions B, D, E, and G on adenosylcobyrinic A,C-diamide. NH(2) groups are provided by glutamine, and one molecule of ATP is hydrogenolyzed for each amidation. This Nostoc punctiforme (strain ATCC 29133 / PCC 73102) protein is Cobyric acid synthase.